A 224-amino-acid polypeptide reads, in one-letter code: 2,5-diamino-6-ribosylamino-4(3H)-pyrimidinone 5'-phosphate reductase (224 aa).

Residues Gly16, Thr57, Asp61, Ser83 to Arg86, Val134, and Gly156 to Leu159 each bind NADP(+).

Belongs to the HTP reductase family. In terms of assembly, homodimer.

The enzyme catalyses 2,5-diamino-6-(1-D-ribitylamino)pyrimidin-4(3H)-one 5'-phosphate + NADP(+) = 2,5-diamino-6-(1-D-ribosylamino)pyrimidin-4(3H)-one 5'-phosphate + NADPH + H(+). The catalysed reaction is 2,5-diamino-6-(1-D-ribitylamino)pyrimidin-4(3H)-one 5'-phosphate + NAD(+) = 2,5-diamino-6-(1-D-ribosylamino)pyrimidin-4(3H)-one 5'-phosphate + NADH + H(+). It functions in the pathway cofactor biosynthesis; riboflavin biosynthesis. Catalyzes an early step in riboflavin biosynthesis, the NAD(P)H-dependent reduction of the ribose side chain of 2,5-diamino-6-ribosylamino-4(3H)-pyrimidinone 5'-phosphate, yielding 2,5-diamino-6-ribitylamino-4(3H)-pyrimidinone 5'-phosphate. The beta anomer is the authentic substrate, and the alpha anomer can serve as substrate subsequent to spontaneous anomerization. NADPH and NADH function equally well as the reductants. Does not catalyze the reduction of 5-amino-6-(5-phospho-D-ribosylamino)uracil to 5-amino-6-(5-phospho-D-ribitylamino)uracil. The chain is 2,5-diamino-6-ribosylamino-4(3H)-pyrimidinone 5'-phosphate reductase (arfC) from Methanocaldococcus jannaschii (strain ATCC 43067 / DSM 2661 / JAL-1 / JCM 10045 / NBRC 100440) (Methanococcus jannaschii).